Here is a 1713-residue protein sequence, read N- to C-terminus: uncharacterized protein (1713 aa).

Residues 1–12 show a composition bias toward polar residues; the sequence is MNENEFSTNSLI. 7 disordered regions span residues 1-35, 79-200, 226-290, 309-557, 713-734, 808-952, and 1143-1190; these read MNENEFSTNSLINQQGTNNNNNNNTNNNITNINFG, QQLN…KLSN, GNNN…QPLS, QYLS…PMSH, SNDQNDRVPIHQLGGATGKKDR, SPPM…SITT, and HHHH…SISR. 5 stretches are compositionally biased toward low complexity: residues 13–35, 79–109, 126–170, 177–200, and 226–264; these read NQQGTNNNNNNNTNNNITNINFG, QQLNTPPTTPNTSTPSTPTSSRNNNNNNNNN, NNSG…NSGN, NMSDITNDNSNSSSNAGSNSKLSN, and GNNNYHNGNNENGNNTFHVGNNLNNNNNNNNIGSSGGNN. Residues 265–276 show a composition bias toward basic residues; that stretch reads SHHHHNHSHHNS. 2 stretches are compositionally biased toward low complexity: residues 317–470 and 478–489; these read NNIN…SPAS and SNNFGGNHNNYN. Positions 490–504 are enriched in basic residues; that stretch reads HAHHSHHNNHAHHNT. Residues 505 to 553 are compositionally biased toward low complexity; it reads HNYNNNNNNNNNNNNNNNNNNNNSNNSNNNSNTNNNGNNGNNSNNNNNH. A DNA-binding region (NDT80) is located at residues 544–825; sequence GNNSNNNNNH…QNPGRFLNHD (282 aa). The segment covering 822–832 has biased composition (basic and acidic residues); sequence LNHDKSLKKDP. A compositionally biased stretch (gly residues) spans 838 to 874; it reads GGKGGGGSGSGGMGGGMGGGMGNNGSSGSSSNGGYGN. 2 stretches are compositionally biased toward low complexity: residues 898 to 946 and 1148 to 1189; these read SPTT…PTLT and QQQQ…SSIS. In terms of domain architecture, Peptidase S74 spans 1240 to 1355; that stretch reads SDQRIKSNIR…RSLKKEKDHI (116 aa). 3 helical membrane passes run 1416–1436, 1447–1467, and 1473–1493; these read TMFVFGFFIPICWIIGSFYLF, LMNFVATIIFILALSLMTFYV, and LIIAPALIVMGFVVCILVGFF. Residues 1596–1605 show a composition bias toward low complexity; sequence NSNNNINNNN. 2 disordered regions span residues 1596–1634 and 1646–1665; these read NSNNNINNNNQERLSDSSKSSFIDDFKKSSSNNHKDFHE and IKGKKQSSSSAKTRSLSSSN. Residues 1617–1634 are compositionally biased toward basic and acidic residues; that stretch reads FIDDFKKSSSNNHKDFHE.

The protein resides in the membrane. This is an uncharacterized protein from Dictyostelium discoideum (Social amoeba).